The primary structure comprises 266 residues: Stomatin homolog PH1511 (266 aa).

A helical membrane pass occupies residues 7-27 (FFVTSIILLFILIFLASAIKI). 2 coiled-coil regions span residues 125–152 (GQAH…EATD) and 178–213 (RQAE…ISEH).

It belongs to the band 7/mec-2 family. In terms of assembly, homotrimer. Interacts with PH1510 and is cleaved by PH1510.

The protein localises to the membrane. This chain is Stomatin homolog PH1511, found in Pyrococcus horikoshii (strain ATCC 700860 / DSM 12428 / JCM 9974 / NBRC 100139 / OT-3).